Here is a 37-residue protein sequence, read N- to C-terminus: Photosystem II reaction center protein L (37 aa).

Topologically, residues Met1–Asn13 are cytoplasmic. Residues Arg14–Phe35 form a helical membrane-spanning segment. The Lumenal segment spans residues Phe36 to Asn37.

PSII is composed of 1 copy each of membrane proteins PsbA, PsbB, PsbC, PsbD, PsbE, PsbF, PsbH, PsbI, PsbJ, PsbK, PsbL, PsbM, PsbT, PsbX, PsbY, PsbZ, Psb30/Ycf12, peripheral proteins PsbO, CyanoQ (PsbQ), PsbU, PsbV and a large number of cofactors. It forms dimeric complexes. Part of a photosystem II (PSII) assembly intermediate complex PSII-I; crystallized from a strain deleted of psbJ, it forms monomeric PSII before addition of the oxygen evolving complex. PSII-I includes 3 assembly factors not found in mature PSII (Psb27, Psb28 and Psb34). The cofactor is PSII binds multiple chlorophylls, carotenoids and specific lipids..

Its subcellular location is the cellular thylakoid membrane. In terms of biological role, one of the components of the core complex of photosystem II (PSII). PSII is a light-driven water:plastoquinone oxidoreductase that uses light energy to abstract electrons from H(2)O, generating O(2) and a proton gradient subsequently used for ATP formation. It consists of a core antenna complex that captures photons, and an electron transfer chain that converts photonic excitation into a charge separation. This subunit is found at the monomer-monomer interface and is required for correct PSII assembly and/or dimerization. This subunit may make specific contacts with lipid(s). The polypeptide is Photosystem II reaction center protein L (Thermosynechococcus vestitus (strain NIES-2133 / IAM M-273 / BP-1)).